Consider the following 235-residue polypeptide: Small ribosomal subunit protein uS3 (235 aa).

In terms of domain architecture, KH type-2 spans 39-107; the sequence is VRKFLNKELA…PAQINIAEVK (69 aa). Residues 215–235 form a disordered region; that stretch reads AQPEQQPADKPKKAPRGKGRK.

It belongs to the universal ribosomal protein uS3 family. As to quaternary structure, part of the 30S ribosomal subunit. Forms a tight complex with proteins S10 and S14.

Its function is as follows. Binds the lower part of the 30S subunit head. Binds mRNA in the 70S ribosome, positioning it for translation. This chain is Small ribosomal subunit protein uS3, found in Pasteurella multocida (strain Pm70).